Here is a 29-residue protein sequence, read N- to C-terminus: Cyclotide psyleio C (29 aa).

A cross-link (cyclopeptide (Gly-Arg)) is located at residues 1 to 29; it reads GDLPVCGETCFGGTCNTPGCVCAWPVCTR. 3 cysteine pairs are disulfide-bonded: C6/C20, C10/C22, and C15/C27.

In terms of processing, this is a cyclic peptide.

Functionally, probably participates in a plant defense mechanism. This chain is Cyclotide psyleio C, found in Psychotria leiocarpa.